We begin with the raw amino-acid sequence, 193 residues long: dCTP deaminase (193 aa).

Residues 110 to 115, D128, 136 to 138, Y171, K178, and Q182 contribute to the dCTP site; these read RSSLAR and VLE. E138 serves as the catalytic Proton donor/acceptor. The disordered stretch occupies residues 171–193; that stretch reads YHQRQDAKYHNQKGAVASRIDKD.

The protein belongs to the dCTP deaminase family. In terms of assembly, homotrimer.

It carries out the reaction dCTP + H2O + H(+) = dUTP + NH4(+). It functions in the pathway pyrimidine metabolism; dUMP biosynthesis; dUMP from dCTP (dUTP route): step 1/2. In terms of biological role, catalyzes the deamination of dCTP to dUTP. The protein is dCTP deaminase of Hamiltonella defensa subsp. Acyrthosiphon pisum (strain 5AT).